A 354-amino-acid polypeptide reads, in one-letter code: Small ribosomal subunit biogenesis GTPase RsgA (354 aa).

Residues 1 to 46 (MSKKKPLSQGQLRRMRANHEKRLNRDSGDKNTPELQDSSLGPEQSG) are disordered. Over residues 17-32 (ANHEKRLNRDSGDKNT) the composition is skewed to basic and acidic residues. Polar residues predominate over residues 33 to 46 (PELQDSSLGPEQSG). The CP-type G domain maps to 108–276 (HSSLSRPDLY…LIDSPGVREF (169 aa)). GTP contacts are provided by residues 164–167 (NKID) and 218–226 (GQSGVGKSS). Residues cysteine 300, cysteine 305, histidine 307, and cysteine 313 each contribute to the Zn(2+) site.

This sequence belongs to the TRAFAC class YlqF/YawG GTPase family. RsgA subfamily. In terms of assembly, monomer. Associates with 30S ribosomal subunit, binds 16S rRNA. Zn(2+) serves as cofactor.

It localises to the cytoplasm. One of several proteins that assist in the late maturation steps of the functional core of the 30S ribosomal subunit. Helps release RbfA from mature subunits. May play a role in the assembly of ribosomal proteins into the subunit. Circularly permuted GTPase that catalyzes slow GTP hydrolysis, GTPase activity is stimulated by the 30S ribosomal subunit. The protein is Small ribosomal subunit biogenesis GTPase RsgA of Shewanella oneidensis (strain ATCC 700550 / JCM 31522 / CIP 106686 / LMG 19005 / NCIMB 14063 / MR-1).